The following is a 529-amino-acid chain: G-protein coupled receptor 161 (529 aa).

At 1–30 (MSLNSSLSCRKELSNLTEEEGGEGGVIITQ) the chain is on the extracellular side. 2 N-linked (GlcNAc...) asparagine glycosylation sites follow: N4 and N15. A helical membrane pass occupies residues 31–51 (FIAIIVITIFVCLGNLVIVVT). Residues 52 to 64 (LYKKSYLLTLSNK) are Cytoplasmic-facing. The helical transmembrane segment at 65 to 85 (FVFSLTLSNFLLSVLVLPFVV) threads the bilayer. Over 86-101 (TSSIRREWIFGVVWCN) the chain is Extracellular. The cysteines at positions 100 and 178 are disulfide-linked. The helical transmembrane segment at 102-123 (FSALLYLLISSASMLTLGVIAI) threads the bilayer. At 124 to 143 (DRYYAVLYPMVYPMKITGNR) the chain is on the cytoplasmic side. A helical membrane pass occupies residues 144-164 (AVMALVYIWLHSLIGCLPPLF). The Extracellular portion of the chain corresponds to 165–190 (GWSSVEFDEFKWMCVAAWHREPGYTA). The chain crosses the membrane as a helical span at residues 191–211 (FWQIWCALFPFLVMLVCYGFI). At 212-269 (FRVARVKARKVHCGTVVIVEEDAQRTGRKNSSTSTSSSGSRRNAFQGVVYSANQCKAL) the chain is on the cytoplasmic side. A helical transmembrane segment spans residues 270–290 (ITILVVLGAFMVTWGPYMVVI). At 291–306 (ASEALWGKSSVSPSLE) the chain is on the extracellular side. The helical transmembrane segment at 307–327 (TWATWLSFASAVCHPLIYGLW) threads the bilayer. Topologically, residues 328–529 (NKTVRKELLG…EGDVLAAEQR (202 aa)) are cytoplasmic.

It belongs to the G-protein coupled receptor 1 family.

Its subcellular location is the cell projection. It is found in the cilium membrane. The protein localises to the cell membrane. Its function is as follows. Key negative regulator of Shh signaling, which promotes the processing of GLI3 into GLI3R during neural tube development. Recruited by TULP3 and the IFT-A complex to primary cilia and acts as a regulator of the PKA-dependent basal repression machinery in Shh signaling by increasing cAMP levels, leading to promote the PKA-dependent processing of GLI3 into GLI3R and repress the Shh signaling. In presence of SHH, it is removed from primary cilia and is internalized into recycling endosomes, preventing its activity and allowing activation of the Shh signaling. Its ligand is unknown. The polypeptide is G-protein coupled receptor 161 (GPR161) (Homo sapiens (Human)).